Consider the following 330-residue polypeptide: Malate dehydrogenase (330 aa).

Residue 12 to 18 coordinates NAD(+); that stretch reads GAAGQIG. The substrate site is built by Arg93 and Arg99. Residues Asn106, Gln113, and 130 to 132 contribute to the NAD(+) site; that span reads VGN. 2 residues coordinate substrate: Asn132 and Arg163. Residue His188 is the Proton acceptor of the active site.

It belongs to the LDH/MDH superfamily. MDH type 2 family.

It catalyses the reaction (S)-malate + NAD(+) = oxaloacetate + NADH + H(+). Functionally, catalyzes the reversible oxidation of malate to oxaloacetate. This chain is Malate dehydrogenase, found in Thermobifida fusca (strain YX).